A 120-amino-acid polypeptide reads, in one-letter code: Large ribosomal subunit protein bL19 (120 aa).

It belongs to the bacterial ribosomal protein bL19 family.

In terms of biological role, this protein is located at the 30S-50S ribosomal subunit interface and may play a role in the structure and function of the aminoacyl-tRNA binding site. This Thermosynechococcus vestitus (strain NIES-2133 / IAM M-273 / BP-1) protein is Large ribosomal subunit protein bL19.